The chain runs to 173 residues: C-phycocyanin-2 beta subunit (173 aa).

Asn73 carries the post-translational modification N4-methylasparagine. The (2R,3E)-phycocyanobilin site is built by Cys83 and Cys154.

The protein belongs to the phycobiliprotein family. In terms of assembly, heterodimer of an alpha and a beta subunit, which further assembles into trimers and the trimers into hexamers. Contains two covalently linked bilin chromophores.

Its subcellular location is the cellular thylakoid membrane. Light-harvesting photosynthetic bile pigment-protein from the phycobiliprotein complex (phycobilisome, PBS). Phycocyanin is the major phycobiliprotein in the PBS rod. In Synechococcus sp. (strain ATCC 27144 / PCC 6301 / SAUG 1402/1) (Anacystis nidulans), this protein is C-phycocyanin-2 beta subunit (cpcB2).